The following is a 300-amino-acid chain: GTPase Era (300 aa).

An Era-type G domain is found at 4 to 172 (KSGFVALIGR…LEKIKKLLPE (169 aa)). The interval 12 to 19 (GRPNVGKS) is G1. Position 12–19 (12–19 (GRPNVGKS)) interacts with GTP. A G2 region spans residues 38 to 42 (QTTRN). Positions 59 to 62 (DTPG) are G3. GTP-binding positions include 59–63 (DTPGV) and 122–125 (NKAD). The segment at 122–125 (NKAD) is G4. Residues 151–153 (IAA) are G5. The 87-residue stretch at 195–281 (IREKILLNLS…NLQLWVKVKK (87 aa)) folds into the KH type-2 domain.

It belongs to the TRAFAC class TrmE-Era-EngA-EngB-Septin-like GTPase superfamily. Era GTPase family. As to quaternary structure, monomer.

The protein localises to the cytoplasm. It localises to the cell membrane. Functionally, an essential GTPase that binds both GDP and GTP, with rapid nucleotide exchange. Plays a role in 16S rRNA processing and 30S ribosomal subunit biogenesis and possibly also in cell cycle regulation and energy metabolism. The polypeptide is GTPase Era (Caldicellulosiruptor saccharolyticus (strain ATCC 43494 / DSM 8903 / Tp8T 6331)).